The following is a 424-amino-acid chain: Putative fasciclin-like arabinogalactan protein 20 (424 aa).

A helical membrane pass occupies residues 46-66 (LLTTFFLIFFVLDIDLVATSM). The FAS1 1 domain occupies 56–194 (VLDIDLVATS…YVVIYGSDEF (139 aa)). N-linked (GlcNAc...) asparagine glycans are attached at residues Asn153 and Asn160. Low complexity predominate over residues 199–226 (TKISDDSSSSSSIPSTTSSTGSIPIPSS). Residues 199–246 (TKISDDSSSSSSIPSTTSSTGSIPIPSSATQTPPSPNIASDSTRNLPN) form a disordered region. A compositionally biased stretch (polar residues) spans 227-246 (ATQTPPSPNIASDSTRNLPN). N-linked (GlcNAc...) asparagine glycans are attached at residues Asn246, Asn283, and Asn287. The FAS1 2 domain maps to 250–384 (PVNRFNIFES…IAVHGFNQMI (135 aa)). The segment at 405–424 (QEEEGVHGEYSSELGDYGLH) is disordered.

Belongs to the fasciclin-like AGP family.

The protein localises to the membrane. Its function is as follows. May be a cell surface adhesion protein. The polypeptide is Putative fasciclin-like arabinogalactan protein 20 (FLA20) (Arabidopsis thaliana (Mouse-ear cress)).